The sequence spans 1030 residues: MAAAAAVEAAAPMGALWGLVHDFVVGQQEGPADQVAADVKSGNYTVLQVVEALGSSLENPEPRTRARAIQLLSQVLLHCHTLLLEKEVVHLILFYENRLKDHHLVIPSVLQGLKALSLCVALPPGLAVSVLKAIFQEVHVQSLPQVDRHTVYNIITNFMRTREEELKSLGADFTFGFIQVMDGEKDPRNLLVAFRIVHDLISRDYSLGPFVEELFEVTSCYFPIDFTPPPNDPHGIQREDLILSLRAVLASTPRFAEFLLPLLIEKVDSEVLSAKLDSLQTLNACCAVYGQKELKDFLPSLWASIRREVFQTASERVEAEGLAALHSLTACLSRSVLRADAEDLLDSFLSNILQDCRHHLCEPDMKLVWPSAKLLQAAAGASARACDSVTSNVLPLLLEQFHKHSQSSQRRTILEMLLGFLKLQQKWSYEDKDQRPLNGFKDQLCSLVFMALTDPSTQLQLVGIRTLTVLGAQPDLLSYEDLELAVGHLYRLSFLKEDSQSCRVAALEASGTLAALYPVAFSSHLVPKLAEELRVGESNLTNGDEPTQCSRHLCCLQALSAVSTHPSIVKETLPLLLQHLWQVNRGNMVAQSSDVIAVCQSLRQMAEKCQQDPESCWYFHQTAIPCLLALAVQASMPEKEPSVLRKVLLEDEVLAAMVSVIGTATTHLSPELAAQSVTHIVPLFLDGNVSFLPENSFPSRFQPFQDGSSGQRRLIALLMAFVCSLPRNVEIPQLNQLMRELLELSCCHSCPFSSTAAAKCFAGLLNKHPAGQQLDEFLQLAVDKVEAGLGSGPCRSQAFTLLLWVTKALVLRYHPLSSCLTARLMGLLSDPELGPAAADGFSLLMSDCTDVLTRAGHAEVRIMFRQRFFTDNVPALVQGFHAAPQDVKPNYLKGLSHVLNRLPKPVLLPELPTLLSLLLEALSCPDCVVQLSTLSCLQPLLLEAPQVMSLHVDTLVTKFLNLSSSPSMAVRIAALQCMHALTRLPTPVLLPYKPQVIRALAKPLDDKKRLVRKEAVSARGEWFLLGSPGS.

N-acetylalanine is present on alanine 2. Lysine 496 carries the N6-acetyllysine modification. 4 HEAT repeats span residues 866-904 (QRFF…RLPK), 908-946 (LPEL…EAPQ), 949-987 (SLHV…LPTP), and 990-1028 (LPYK…LGSP). Serine 1027 carries the post-translational modification Phosphoserine.

It belongs to the MET18/MMS19 family. In terms of assembly, component of the CIA complex. In the CIA complex, interacts directly with CIAO2B and CIAO3. Component of the MMXD complex, composed of CIAO1, ERCC2, CIAO2B, MMS19 and SLC25A5. Interacts with CIAO2B; the interaction is direct. Interacts with ERCC2/XPD; the interaction is direct. Interacts with ERCC3/XPB and NCOA3/RAC3. Interacts with RTEL1; the interaction mediates the association of RTEL1 with the CIA complex. Interacts with BRIP1. Interacts with KIF4A; the interaction facilitates the transfer of Fe-S clusters to KIF4A to ensure proper localization of KIF4A to the mitotic machinery components. Interacts with CCDC117; the interaction is indirect. In terms of processing, ubiquitinated; undergoes 'Lys-48'-linked polyubiquitination by MAGEF1-NSMCE1 ubiquitin ligase complex leading to proteasomal degradation. In terms of tissue distribution, ubiquitously expressed with higher expression in testis.

It is found in the nucleus. Its subcellular location is the cytoplasm. It localises to the cytoskeleton. The protein localises to the spindle. The protein resides in the microtubule organizing center. It is found in the centrosome. Key component of the cytosolic iron-sulfur protein assembly (CIA) complex, a multiprotein complex that mediates the incorporation of iron-sulfur cluster into apoproteins specifically involved in DNA metabolism and genomic integrity. In the CIA complex, MMS19 acts as an adapter between early-acting CIA components and a subset of cellular target iron-sulfur proteins such as ERCC2/XPD, FANCJ and RTEL1, thereby playing a key role in nucleotide excision repair (NER), homologous recombination-mediated double-strand break DNA repair, DNA replication and RNA polymerase II (POL II) transcription. As part of the mitotic spindle-associated MMXD complex, plays a role in chromosome segregation, probably by facilitating iron-sulfur (Fe-S) cluster assembly into ERCC2/XPD. Together with CIAO2, facilitates the transfer of Fe-S clusters to the motor protein KIF4A, which ensures proper localization of KIF4A to mitotic machinery components to promote the progression of mitosis. Indirectly acts as a transcriptional coactivator of estrogen receptor (ER), via its role in iron-sulfur insertion into some component of the TFIIH-machinery. This is MMS19 nucleotide excision repair protein homolog from Homo sapiens (Human).